Here is a 256-residue protein sequence, read N- to C-terminus: DNA repair protein RecO (256 aa).

It belongs to the RecO family.

In terms of biological role, involved in DNA repair and RecF pathway recombination. The sequence is that of DNA repair protein RecO from Bartonella henselae (strain ATCC 49882 / DSM 28221 / CCUG 30454 / Houston 1) (Rochalimaea henselae).